Here is a 234-residue protein sequence, read N- to C-terminus: MGQKVNPIGLRLGINRNWESRWFPKFETMPANVAEDDKIRKYVKKELYYAGIAQTVVERTAKKVRVTVVAARPGIIIGKKGADVEKLKDALSKLVGKEIAVNIKEERKPQISAQLSAENVAQQLERRVAFRRAMKRVMQNALKGGAKGIKVSVSGRLGGAEMARTEWYLEGRVPLHTLRARIDYGFAEAHTTYGCIGIKVWIFKGEVLAKGIPTEKAEETTSKPKRRPAKKRGK.

In terms of domain architecture, KH type-2 spans 39–107; that stretch reads IRKYVKKELY…EIAVNIKEER (69 aa). The segment covering 213-222 has biased composition (basic and acidic residues); that stretch reads PTEKAEETTS. The interval 213–234 is disordered; sequence PTEKAEETTSKPKRRPAKKRGK. Basic residues predominate over residues 223-234; that stretch reads KPKRRPAKKRGK.

This sequence belongs to the universal ribosomal protein uS3 family. In terms of assembly, part of the 30S ribosomal subunit. Forms a tight complex with proteins S10 and S14.

Its function is as follows. Binds the lower part of the 30S subunit head. Binds mRNA in the 70S ribosome, positioning it for translation. This chain is Small ribosomal subunit protein uS3, found in Aliarcobacter butzleri (strain RM4018) (Arcobacter butzleri).